The primary structure comprises 127 residues: Small ribosomal subunit protein uS11 (127 aa).

Belongs to the universal ribosomal protein uS11 family. Part of the 30S ribosomal subunit. Interacts with proteins S7 and S18. Binds to IF-3.

In terms of biological role, located on the platform of the 30S subunit, it bridges several disparate RNA helices of the 16S rRNA. Forms part of the Shine-Dalgarno cleft in the 70S ribosome. This is Small ribosomal subunit protein uS11 from Chlorobium phaeobacteroides (strain BS1).